Consider the following 179-residue polypeptide: ATP-dependent protease subunit HslV (179 aa).

Residue Thr7 is part of the active site. Na(+) contacts are provided by Gly162, Cys165, and Thr168.

The protein belongs to the peptidase T1B family. HslV subfamily. A double ring-shaped homohexamer of HslV is capped on each side by a ring-shaped HslU homohexamer. The assembly of the HslU/HslV complex is dependent on binding of ATP.

It localises to the cytoplasm. The catalysed reaction is ATP-dependent cleavage of peptide bonds with broad specificity.. Its activity is regulated as follows. Allosterically activated by HslU binding. Protease subunit of a proteasome-like degradation complex believed to be a general protein degrading machinery. In Aromatoleum aromaticum (strain DSM 19018 / LMG 30748 / EbN1) (Azoarcus sp. (strain EbN1)), this protein is ATP-dependent protease subunit HslV.